The following is a 299-amino-acid chain: Nitrogenase iron protein (299 aa).

8–15 (GKGGIGKS) is an ATP binding site. Cys-96 provides a ligand contact to [4Fe-4S] cluster. Residue Arg-99 is modified to ADP-ribosylarginine; by dinitrogenase reductase ADP-ribosyltransferase. Cys-130 contributes to the [4Fe-4S] cluster binding site.

The protein belongs to the NifH/BchL/ChlL family. Homodimer. [4Fe-4S] cluster serves as cofactor. Post-translationally, the reversible ADP-ribosylation of Arg-99 inactivates the nitrogenase reductase and regulates nitrogenase activity.

It carries out the reaction N2 + 8 reduced [2Fe-2S]-[ferredoxin] + 16 ATP + 16 H2O = H2 + 8 oxidized [2Fe-2S]-[ferredoxin] + 2 NH4(+) + 16 ADP + 16 phosphate + 6 H(+). In terms of biological role, the key enzymatic reactions in nitrogen fixation are catalyzed by the nitrogenase complex, which has 2 components: the iron protein and the molybdenum-iron protein. This is Nitrogenase iron protein from Gloeothece citriformis (strain PCC 7424) (Cyanothece sp. (strain PCC 7424)).